A 507-amino-acid chain; its full sequence is ATP synthase subunit alpha, chloroplastic (507 aa).

170 to 177 (GDRQTGKT) is an ATP binding site.

Belongs to the ATPase alpha/beta chains family. In terms of assembly, F-type ATPases have 2 components, CF(1) - the catalytic core - and CF(0) - the membrane proton channel. CF(1) has five subunits: alpha(3), beta(3), gamma(1), delta(1), epsilon(1). CF(0) has four main subunits: a, b, b' and c.

It localises to the plastid. Its subcellular location is the chloroplast thylakoid membrane. The catalysed reaction is ATP + H2O + 4 H(+)(in) = ADP + phosphate + 5 H(+)(out). Functionally, produces ATP from ADP in the presence of a proton gradient across the membrane. The alpha chain is a regulatory subunit. The sequence is that of ATP synthase subunit alpha, chloroplastic from Oenothera glazioviana (Large-flowered evening primrose).